A 561-amino-acid chain; its full sequence is Phosphoinositide phospholipase C 1 (561 aa).

The region spanning 21–54 is the EF-hand domain; sequence EPPEEIKNLFHDYSQDDRMSADEMLRFVIQVQGE. One can recognise a PI-PLC X-box domain in the interval 105 to 249; sequence QDMNQPLSHY…LKNKILISTK (145 aa). Active-site residues include His120 and His166. The segment covering 256–266 has biased composition (polar residues); sequence QTQISKGSTTD. Residues 256–285 are disordered; that stretch reads QTQISKGSTTDESTRAKKISDAEEQVQEED. Positions 267–276 are enriched in basic and acidic residues; sequence ESTRAKKISD. In terms of domain architecture, PI-PLC Y-box spans 294-410; sequence RDLISIHAGN…GYVKKPDVLL (117 aa). In terms of domain architecture, C2 spans 414-541; the sequence is PEGEIFDPCS…PGIRAVRLHD (128 aa). Residues Asp452, Asp458, Asp510, Asp512, and Asp518 each coordinate Ca(2+).

Ca(2+) is required as a cofactor. As to expression, expressed in stems, leaves, roots, flowers and siliques. Predominant in the vascular tissues of roots and leaves.

Its subcellular location is the cell membrane. It carries out the reaction a 1,2-diacyl-sn-glycero-3-phospho-(1D-myo-inositol-4,5-bisphosphate) + H2O = 1D-myo-inositol 1,4,5-trisphosphate + a 1,2-diacyl-sn-glycerol + H(+). In terms of biological role, the production of the second messenger molecules diacylglycerol (DAG) and inositol 1,4,5-trisphosphate (IP3) is mediated by activated phosphatidylinositol-specific phospholipase C enzymes. Required for secondary responses to abscisic acid signals. The chain is Phosphoinositide phospholipase C 1 (PLC1) from Arabidopsis thaliana (Mouse-ear cress).